Consider the following 410-residue polypeptide: D-amino acid dehydrogenase (410 aa).

Residue 9 to 14 (GGGIVG) participates in FAD binding.

This sequence belongs to the DadA oxidoreductase family. It depends on FAD as a cofactor.

Its subcellular location is the cell inner membrane. It carries out the reaction a D-alpha-amino acid + a quinone + H2O = a 2-oxocarboxylate + a quinol + NH4(+). Catalyzes the oxidative deamination of D-amino acids. Has broad substrate specificity; is mostly active on D-proline, and to a lesser extent, on several other D-amino acids such as D-alanine, D-phenylalanine and D-serine. Mediates electron transport from D-proline to coenzyme Q1 in vitro, and is involved in the electron transport chain from D-proline to the c-type cytochrome in vivo. This is D-amino acid dehydrogenase from Helicobacter pylori (strain ATCC 700392 / 26695) (Campylobacter pylori).